Reading from the N-terminus, the 649-residue chain is DNA mismatch repair protein MutL (649 aa).

It belongs to the DNA mismatch repair MutL/HexB family.

This protein is involved in the repair of mismatches in DNA. It is required for dam-dependent methyl-directed DNA mismatch repair. May act as a 'molecular matchmaker', a protein that promotes the formation of a stable complex between two or more DNA-binding proteins in an ATP-dependent manner without itself being part of a final effector complex. This Streptococcus pneumoniae serotype 2 (strain D39 / NCTC 7466) protein is DNA mismatch repair protein MutL.